The chain runs to 88 residues: Phosphocarrier protein HPr (88 aa).

One can recognise an HPr domain in the interval 1 to 88 (MEQASFVVID…EVLKKEGLAE (88 aa)). The Pros-phosphohistidine intermediate role is filled by His-15. At Ser-46 the chain carries Phosphoserine; by HPrK/P.

This sequence belongs to the HPr family.

The protein localises to the cytoplasm. With respect to regulation, phosphorylation on Ser-46 inhibits the phosphoryl transfer from enzyme I to HPr. General (non sugar-specific) component of the phosphoenolpyruvate-dependent sugar phosphotransferase system (sugar PTS). This major carbohydrate active-transport system catalyzes the phosphorylation of incoming sugar substrates concomitantly with their translocation across the cell membrane. The phosphoryl group from phosphoenolpyruvate (PEP) is transferred to the phosphoryl carrier protein HPr by enzyme I. Phospho-HPr then transfers it to the PTS EIIA domain. Its function is as follows. P-Ser-HPr interacts with the catabolite control protein A (CcpA), forming a complex that binds to DNA at the catabolite response elements cre, operator sites preceding a large number of catabolite-regulated genes. Thus, P-Ser-HPr is a corepressor in carbon catabolite repression (CCR), a mechanism that allows bacteria to coordinate and optimize the utilization of available carbon sources. P-Ser-HPr also plays a role in inducer exclusion, in which it probably interacts with several non-PTS permeases and inhibits their transport activity. The polypeptide is Phosphocarrier protein HPr (ptsH) (Listeria monocytogenes serovar 1/2a (strain ATCC BAA-679 / EGD-e)).